The following is an 837-amino-acid chain: SLIT and NTRK-like protein 4 (837 aa).

The N-terminal stretch at 1 to 18 is a signal peptide; sequence MFLWLFLIVSALISSTNA. Residues 19–618 are Extracellular-facing; that stretch reads DSDISVEICN…SPPGGPVPLS (600 aa). LRR repeat units lie at residues 60 to 81, 84 to 105, 108 to 129, 132 to 153, 156 to 177, and 179 to 200; these read NFYH…TFVN, HAVS…AFLG, ALKQ…TFLG, NLEY…AFNK, KLKV…IFRF, and SLTH…GVLE. A glycan (N-linked (GlcNAc...) asparagine) is linked at asparagine 81. An LRRCT 1 domain is found at 213–264; sequence NPWNCSCDLLPLKAWLENMPYNIYIGEAICETPSDLYGRLLKETNKQELCPM. Asparagine 325 is a glycosylation site (N-linked (GlcNAc...) asparagine). The 43-residue stretch at 333–375 folds into the LRRNT domain; it reads QTRVPPLTPCPVPCFCKTHPSDLGLSVNCQEKNIQSMSELTPK. LRR repeat units follow at residues 378–399, 402–423, 426–447, 450–471, 474–495, and 497–518; these read NAKK…DFTE, GLDL…VFHN, NLRR…IFSG, NLQY…TFDS, NLQL…IFSG, and PLAR…GVLD. Asparagine 423 carries an N-linked (GlcNAc...) asparagine glycan. The LRRCT 2 domain maps to 531 to 582; that stretch reads NPWDCTCDLVALKLWLEKLNDGIVVKELKCETPVQFANIELKSLKNEILCPK. A helical transmembrane segment spans residues 619–639; sequence ILILSILVVLILTVFVAFCLL. Residues 640–837 are Cytoplasmic-facing; it reads VFVLRRNKKP…LEEQTALNKI (198 aa).

This sequence belongs to the SLITRK family. In terms of assembly, interacts (via LRR 1 and 2 repeats) with PTPRD (via extracellular domain). As to expression, in the adult, significant expression is detected only in the brain. Broadly expressed in embryonic brain with highest expression in subventricular zone, subplate, cortical plate, pyramidal cell layer of hippocampus, thalamus and hypothalamus.

It is found in the membrane. The protein localises to the cell membrane. It is involved in synaptogenesis and promotes synapse differentiation. Suppresses neurite outgrowth. In Mus musculus (Mouse), this protein is SLIT and NTRK-like protein 4 (Slitrk4).